Reading from the N-terminus, the 363-residue chain is MIWPALRWTLFHLDPERAHRLAHGALHRVPPGLARLRRPAVPPELRVSCLGLDFDGPIGLAAGFDKGDASIAGLFALGFSHVEIGTITPRPQAGNEPPRLFRLVEHRALVNRMGFNNAGAEVCARRLAGVPATARMGPVGVNVGKNKTTPNEDAAADYLACIDRLHPYADYLVVNISSPNTPGLRQLQERDQLDALLRACAGRLRERAPGKPLLVKLAPDLSPTALDEAVDVAIDAGVSGIVATNTTLSRAGVERHPRAREAGGLSGAPLEALATSVVRRCYIRAAGRVPIVGCGGVMNAEGAYAKIRAGATLVQVYTGLVYGGPGFVRRLNDGLARLLARDGFRTVAEAVGADVETAERAGV.

Residues 62-66 (AGFDK) and Thr86 contribute to the FMN site. Lys66 is a binding site for substrate. Residue 111-115 (NRMGF) coordinates substrate. FMN contacts are provided by Asn142 and Asn175. Asn175 is a substrate binding site. Ser178 serves as the catalytic Nucleophile. Residue Asn180 participates in substrate binding. FMN is bound by residues Lys216 and Thr244. 245 to 246 (NT) is a binding site for substrate. FMN is bound by residues Gly267, Gly296, and 317 to 318 (YT).

It belongs to the dihydroorotate dehydrogenase family. Type 2 subfamily. In terms of assembly, monomer. FMN serves as cofactor.

It localises to the cell membrane. The catalysed reaction is (S)-dihydroorotate + a quinone = orotate + a quinol. It functions in the pathway pyrimidine metabolism; UMP biosynthesis via de novo pathway; orotate from (S)-dihydroorotate (quinone route): step 1/1. Catalyzes the conversion of dihydroorotate to orotate with quinone as electron acceptor. This Anaeromyxobacter sp. (strain Fw109-5) protein is Dihydroorotate dehydrogenase (quinone).